Here is a 105-residue protein sequence, read N- to C-terminus: Putative membrane protein insertion efficiency factor (105 aa).

Positions 68–105 are disordered; it reads FHPGGLDPVPPRRNESGTEISDARPGSDGEASPGAPGL. Residues 77-94 are compositionally biased toward basic and acidic residues; sequence PPRRNESGTEISDARPGS.

Belongs to the UPF0161 family.

It is found in the cell membrane. Could be involved in insertion of integral membrane proteins into the membrane. The protein is Putative membrane protein insertion efficiency factor of Thermobifida fusca (strain YX).